Consider the following 183-residue polypeptide: U3 small nucleolar ribonucleoprotein protein imp3 (183 aa).

Positions 108–174 (RRLPVVMRNI…IKKHVMDYNN (67 aa)) constitute an S4 RNA-binding domain.

The protein belongs to the universal ribosomal protein uS4 family. In terms of assembly, component of a heterotrimeric complex containing imp3, imp4 and mpp10.

The protein localises to the nucleus. Its subcellular location is the nucleolus. Its function is as follows. Component of the U3 small nucleolar ribonucleoprotein. Required for the early cleavages at sites A0, A1 and A2 during 18S ribosomal pre-RNA processing. This chain is U3 small nucleolar ribonucleoprotein protein imp3, found in Caenorhabditis elegans.